Reading from the N-terminus, the 232-residue chain is Phosphatidylserine decarboxylase proenzyme (232 aa).

The active-site Schiff-base intermediate with substrate; via pyruvic acid is the S190. Residue S190 is modified to Pyruvic acid (Ser); by autocatalysis.

It belongs to the phosphatidylserine decarboxylase family. PSD-A subfamily. In terms of assembly, heterodimer of a large membrane-associated beta subunit and a small pyruvoyl-containing alpha subunit. The cofactor is pyruvate. In terms of processing, is synthesized initially as an inactive proenzyme. Formation of the active enzyme involves a self-maturation process in which the active site pyruvoyl group is generated from an internal serine residue via an autocatalytic post-translational modification. Two non-identical subunits are generated from the proenzyme in this reaction, and the pyruvate is formed at the N-terminus of the alpha chain, which is derived from the carboxyl end of the proenzyme. The post-translation cleavage follows an unusual pathway, termed non-hydrolytic serinolysis, in which the side chain hydroxyl group of the serine supplies its oxygen atom to form the C-terminus of the beta chain, while the remainder of the serine residue undergoes an oxidative deamination to produce ammonia and the pyruvoyl prosthetic group on the alpha chain.

It localises to the cell membrane. It carries out the reaction a 1,2-diacyl-sn-glycero-3-phospho-L-serine + H(+) = a 1,2-diacyl-sn-glycero-3-phosphoethanolamine + CO2. Its pathway is phospholipid metabolism; phosphatidylethanolamine biosynthesis; phosphatidylethanolamine from CDP-diacylglycerol: step 2/2. Its function is as follows. Catalyzes the formation of phosphatidylethanolamine (PtdEtn) from phosphatidylserine (PtdSer). The sequence is that of Phosphatidylserine decarboxylase proenzyme from Rhodopseudomonas palustris (strain BisB18).